Reading from the N-terminus, the 265-residue chain is Speedy protein E8 (265 aa).

Residues 1–80 (MGQILGKIMM…EPEKELAPEP (80 aa)) are disordered. A compositionally biased stretch (acidic residues) spans 66–80 (DESDDEPEKELAPEP).

The protein belongs to the Speedy/Ringo family.

The sequence is that of Speedy protein E8 from Homo sapiens (Human).